A 388-amino-acid chain; its full sequence is Phosphopentomutase (388 aa).

Mn(2+) is bound by residues aspartate 10, aspartate 282, histidine 287, aspartate 323, histidine 324, and histidine 335.

This sequence belongs to the phosphopentomutase family. The cofactor is Mn(2+).

Its subcellular location is the cytoplasm. It carries out the reaction 2-deoxy-alpha-D-ribose 1-phosphate = 2-deoxy-D-ribose 5-phosphate. The enzyme catalyses alpha-D-ribose 1-phosphate = D-ribose 5-phosphate. It participates in carbohydrate degradation; 2-deoxy-D-ribose 1-phosphate degradation; D-glyceraldehyde 3-phosphate and acetaldehyde from 2-deoxy-alpha-D-ribose 1-phosphate: step 1/2. Its function is as follows. Isomerase that catalyzes the conversion of deoxy-ribose 1-phosphate (dRib-1-P) and ribose 1-phosphate (Rib-1-P) to deoxy-ribose 5-phosphate (dRib-5-P) and ribose 5-phosphate (Rib-5-P), respectively. The sequence is that of Phosphopentomutase from Acetivibrio thermocellus (strain ATCC 27405 / DSM 1237 / JCM 9322 / NBRC 103400 / NCIMB 10682 / NRRL B-4536 / VPI 7372) (Clostridium thermocellum).